A 411-amino-acid chain; its full sequence is Nuclear receptor subfamily 2 group F member 1-A (411 aa).

Positions 1–68 (MAMVVSVWRD…AGDKGSQNSG (68 aa)) are disordered. Over residues 24–46 (NPAAQPAREQQQAASAAPHTPQT) the composition is skewed to low complexity. A DNA-binding region (nuclear receptor) is located at residues 73–148 (HIECVVCGDK…VGMRREAVQR (76 aa)). 2 NR C4-type zinc fingers span residues 76–96 (CVVC…CEGC) and 112–136 (CRAN…LKKC). Residues 174–400 (YLSGYISLLL…TLIRDMLLSG (227 aa)) enclose the NR LBD domain.

Belongs to the nuclear hormone receptor family. NR2 subfamily. First expressed in 11-12 hour embryos. In the rostral brain of 13 hour embryos, expressed within the anterior half of the midbrain and the posterior part of the diencephalon. In the presumptive hindbrain, expressed in a segment-like stripe in the anterior region, resembling the presumptive rhombomere units of the hindbrain. Also detected in the intermediate mesoderm, posterior to the first somite. As somitogenesis proceeds, expression extends posteriorly and flanks the 10 most anterior somites. Expression changes extensively both in level and expansion of domains between 13 and 20 hours. In the rostral brain, expression extends to include a major part of the diencephalon and a caudal portion of the telencephalon. Within the hindbrain, strongly expressed in the two most anterior rhombomeres, and a lower but uniform expression is seen to extend throughout rhombomere 7. In 28 hour embryos, higher and more uniform expression is seen in both rostral and hindbrain areas. Also expressed in the retina of the eye.

Its subcellular location is the nucleus. Functionally, putative transcription factor that is required in photoreceptor cells precursors during eye development. The protein is Nuclear receptor subfamily 2 group F member 1-A (nr2f1a) of Danio rerio (Zebrafish).